Consider the following 406-residue polypeptide: Argininosuccinate synthase (406 aa).

Residues 10 to 18 and A37 contribute to the ATP site; that span reads AYSGGLDTS. Positions 88 and 93 each coordinate L-citrulline. Residue G118 coordinates ATP. L-aspartate is bound by residues T120, N124, and D125. Residue N124 coordinates L-citrulline. Positions 128, 179, 188, 264, and 276 each coordinate L-citrulline.

It belongs to the argininosuccinate synthase family. Type 1 subfamily. In terms of assembly, homotetramer.

It localises to the cytoplasm. It carries out the reaction L-citrulline + L-aspartate + ATP = 2-(N(omega)-L-arginino)succinate + AMP + diphosphate + H(+). It functions in the pathway amino-acid biosynthesis; L-arginine biosynthesis; L-arginine from L-ornithine and carbamoyl phosphate: step 2/3. The polypeptide is Argininosuccinate synthase (Azotobacter vinelandii (strain DJ / ATCC BAA-1303)).